Consider the following 213-residue polypeptide: Imidazole glycerol phosphate synthase subunit HisH (213 aa).

In terms of domain architecture, Glutamine amidotransferase type-1 spans 4–213; sequence SIAIVDYGMG…LYRNFVHWKP (210 aa). The Nucleophile role is filled by Cys-83. Active-site residues include His-193 and Glu-195.

In terms of assembly, heterodimer of HisH and HisF.

The protein localises to the cytoplasm. The catalysed reaction is 5-[(5-phospho-1-deoxy-D-ribulos-1-ylimino)methylamino]-1-(5-phospho-beta-D-ribosyl)imidazole-4-carboxamide + L-glutamine = D-erythro-1-(imidazol-4-yl)glycerol 3-phosphate + 5-amino-1-(5-phospho-beta-D-ribosyl)imidazole-4-carboxamide + L-glutamate + H(+). It carries out the reaction L-glutamine + H2O = L-glutamate + NH4(+). Its pathway is amino-acid biosynthesis; L-histidine biosynthesis; L-histidine from 5-phospho-alpha-D-ribose 1-diphosphate: step 5/9. Functionally, IGPS catalyzes the conversion of PRFAR and glutamine to IGP, AICAR and glutamate. The HisH subunit catalyzes the hydrolysis of glutamine to glutamate and ammonia as part of the synthesis of IGP and AICAR. The resulting ammonia molecule is channeled to the active site of HisF. The sequence is that of Imidazole glycerol phosphate synthase subunit HisH from Burkholderia lata (strain ATCC 17760 / DSM 23089 / LMG 22485 / NCIMB 9086 / R18194 / 383).